We begin with the raw amino-acid sequence, 235 residues long: Glucosamine-6-phosphate deaminase (235 aa).

The active-site Proton acceptor; for enolization step is Asp-62. The active-site For ring-opening step is Asn-128. Residue His-130 is the Proton acceptor; for ring-opening step of the active site. The active-site For ring-opening step is the Glu-135.

The protein belongs to the glucosamine/galactosamine-6-phosphate isomerase family. NagB subfamily.

The enzyme catalyses alpha-D-glucosamine 6-phosphate + H2O = beta-D-fructose 6-phosphate + NH4(+). It participates in amino-sugar metabolism; N-acetylneuraminate degradation; D-fructose 6-phosphate from N-acetylneuraminate: step 5/5. Catalyzes the reversible isomerization-deamination of glucosamine 6-phosphate (GlcN6P) to form fructose 6-phosphate (Fru6P) and ammonium ion. The chain is Glucosamine-6-phosphate deaminase from Streptococcus sanguinis (strain SK36).